A 456-amino-acid chain; its full sequence is Bifunctional protein GlmU (456 aa).

Residues methionine 1 to arginine 229 form a pyrophosphorylase region. Residues leucine 11–glycine 14, lysine 25, glutamine 76, glycine 81–threonine 82, tyrosine 103–aspartate 105, glycine 140, glutamate 154, asparagine 169, and asparagine 227 contribute to the UDP-N-acetyl-alpha-D-glucosamine site. Aspartate 105 contributes to the Mg(2+) binding site. Asparagine 227 contributes to the Mg(2+) binding site. The tract at residues leucine 230–serine 250 is linker. The interval glycine 251–lysine 456 is N-acetyltransferase. Residues arginine 333 and lysine 351 each coordinate UDP-N-acetyl-alpha-D-glucosamine. Residue histidine 363 is the Proton acceptor of the active site. 2 residues coordinate UDP-N-acetyl-alpha-D-glucosamine: tyrosine 366 and asparagine 377. Residues alanine 380, asparagine 386–tyrosine 387, serine 405, alanine 423, and arginine 440 each bind acetyl-CoA.

In the N-terminal section; belongs to the N-acetylglucosamine-1-phosphate uridyltransferase family. This sequence in the C-terminal section; belongs to the transferase hexapeptide repeat family. As to quaternary structure, homotrimer. Mg(2+) serves as cofactor.

Its subcellular location is the cytoplasm. The enzyme catalyses alpha-D-glucosamine 1-phosphate + acetyl-CoA = N-acetyl-alpha-D-glucosamine 1-phosphate + CoA + H(+). The catalysed reaction is N-acetyl-alpha-D-glucosamine 1-phosphate + UTP + H(+) = UDP-N-acetyl-alpha-D-glucosamine + diphosphate. Its pathway is nucleotide-sugar biosynthesis; UDP-N-acetyl-alpha-D-glucosamine biosynthesis; N-acetyl-alpha-D-glucosamine 1-phosphate from alpha-D-glucosamine 6-phosphate (route II): step 2/2. It functions in the pathway nucleotide-sugar biosynthesis; UDP-N-acetyl-alpha-D-glucosamine biosynthesis; UDP-N-acetyl-alpha-D-glucosamine from N-acetyl-alpha-D-glucosamine 1-phosphate: step 1/1. The protein operates within bacterial outer membrane biogenesis; LPS lipid A biosynthesis. Catalyzes the last two sequential reactions in the de novo biosynthetic pathway for UDP-N-acetylglucosamine (UDP-GlcNAc). The C-terminal domain catalyzes the transfer of acetyl group from acetyl coenzyme A to glucosamine-1-phosphate (GlcN-1-P) to produce N-acetylglucosamine-1-phosphate (GlcNAc-1-P), which is converted into UDP-GlcNAc by the transfer of uridine 5-monophosphate (from uridine 5-triphosphate), a reaction catalyzed by the N-terminal domain. The chain is Bifunctional protein GlmU from Salmonella agona (strain SL483).